Reading from the N-terminus, the 433-residue chain is uncharacterized protein (433 aa).

11 helical membrane passes run 28-48 (FAALGPGILMASAAVGGSHII), 56-76 (IYGWQLAIIIILANLFKYPFF), 102-122 (IWIFFLLNVFATVINTAAVGL), 126-146 (AILTFVLPVQVPVPTLSFIVI), 164-184 (LSKLIMIALTITTVSAVIIAL), 207-227 (ALGFIVALMGWMPAPIEISAI), 250-270 (FNVGYIGTAILALVFLALGAL), 304-324 (GLIAFIAFMCMFGTTITVIDG), 345-365 (SYLNVAITFAALAGLAIIFYF), 375-395 (FAMIASFVSTPVFAYLNLSLV), and 406-426 (LLWLSLIGLMYLTSFTLLFIA).

The protein resides in the cell membrane. This is an uncharacterized protein from Pasteurella multocida (strain Pm70).